We begin with the raw amino-acid sequence, 61 residues long: Small ribosomal subunit protein uS14 (61 aa).

Zn(2+)-binding residues include C24, C27, C40, and C43.

The protein belongs to the universal ribosomal protein uS14 family. Zinc-binding uS14 subfamily. In terms of assembly, part of the 30S ribosomal subunit. Contacts proteins S3 and S10. Zn(2+) is required as a cofactor.

Functionally, binds 16S rRNA, required for the assembly of 30S particles and may also be responsible for determining the conformation of the 16S rRNA at the A site. The sequence is that of Small ribosomal subunit protein uS14 from Desulfotalea psychrophila (strain LSv54 / DSM 12343).